The following is a 1317-amino-acid chain: Toxin protein Tse5 (1317 aa).

The interval 395 to 419 (GRETRRRRDGQGRMLEEESPGKARY) is disordered. Residues 403-415 (DGQGRMLEEESPG) are compositionally biased toward basic and acidic residues.

Its function is as follows. Toxin secreted by the H1 type VI (H1-T6SS) secretion system that acts on bacterial target cells. The producing bacterium is protected by a cognate immunity protein. The sequence is that of Toxin protein Tse5 from Pseudomonas aeruginosa (strain ATCC 15692 / DSM 22644 / CIP 104116 / JCM 14847 / LMG 12228 / 1C / PRS 101 / PAO1).